The sequence spans 396 residues: MPPKKGGDGIKPPPIIGRFGTSLKIGIVGLPNVGKSTFFNVLTNSQASAENFPFCTIDPNESRVPVPDERFDFLCQYHKPASKIPAFLNVVDIAGLVKGAHNGQGLGNAFLSHISACDGIFHLTRAFEDDDITHVEGSVDPIRDIEIIHEELQLKDEEMIGPIIDKLEKVAVRGGDKKLKPEYDIMCKVKSWVIDQKKPVRFYHDWNDKEIEVLNKHLFLTSKPMVYLVNLSEKDYIRKKNKWLIKIKEWVDKYDPGALVIPFSGALELKLQELSAEERQKYLEANMTQSALPKIIKAGFAALQLEYFFTAGPDEVRAWTIRKGTKAPQAAGKIHTDFEKGFIMAEVMKYEDFKEEGSENAVKAAGKYRQQGRNYIVEDGDIIFFKFNTPQQPKKK.

Residues 23–283 (LKIGIVGLPN…LSAEERQKYL (261 aa)) form the OBG-type G domain. 32–37 (NVGKST) is a binding site for ATP. 2 residues coordinate Mg(2+): serine 36 and threonine 56. Leucine 231 is an ATP binding site. The Nuclear export signal signature appears at 267 to 274 (LELKLQEL). Lysine 294 bears the N6-acetyllysine mark. Positions 304-387 (QLEYFFTAGP…EDGDIIFFKF (84 aa)) constitute a TGS domain.

Belongs to the TRAFAC class OBG-HflX-like GTPase superfamily. OBG GTPase family. YchF/OLA1 subfamily. In terms of assembly, monomer. Mg(2+) is required as a cofactor. As to expression, expressed in all tissues tested but its expression is more abundant in testis, liver, lung, and brain. Overexpressed in several malignancies, including cancers of the colon, rectum, ovary, lung, stomach, and uterus.

It is found in the cytoplasm. The protein localises to the nucleus. It localises to the nucleolus. Its function is as follows. Hydrolyzes ATP, and can also hydrolyze GTP with lower efficiency. Has lower affinity for GTP. The sequence is that of Obg-like ATPase 1 from Homo sapiens (Human).